The chain runs to 466 residues: Sushi repeat-containing protein SRPX2 (466 aa).

The first 24 residues, 1-24, serve as a signal peptide directing secretion; that stretch reads MKTGSLTQRGALLLLLLLAPAVTP. 3 consecutive Sushi domains span residues 70–120, 121–179, and 263–322; these read ATCY…YCRQ, MRCH…VCVD, and RRCP…VCTP. Intrachain disulfides connect C72-C106, C92-C118, C123-C164, and C150-C177. The 85-residue stretch at 178 to 262 folds into the HYR domain; that stretch reads VDIDPPKIRC…SCKFIVKVQV (85 aa). Cystine bridges form between C265–C307 and C293–C320.

As to quaternary structure, forms homooligomers. Interacts with PLAUR (via the UPAR/Ly6 domains), ADAMTS4 and CTSB. Interacts with HGF; the interaction increases the mitogenic activity of HGF. Post-translationally, contains chondroitin sulfate chains.

It is found in the secreted. The protein resides in the cytoplasm. The protein localises to the cell surface. Its subcellular location is the synapse. Functionally, acts as a ligand for the urokinase plasminogen activator surface receptor. Plays a role in angiogenesis by inducing endothelial cell migration and the formation of vascular network (cords). Involved in cellular migration and adhesion. Increases the phosphorylation levels of FAK. Interacts with and increases the mitogenic activity of HGF. Promotes synapse formation. This Rattus norvegicus (Rat) protein is Sushi repeat-containing protein SRPX2.